Consider the following 296-residue polypeptide: Probable porphobilinogen deaminase (296 aa).

Cys-241 carries the S-(dipyrrolylmethanemethyl)cysteine modification.

The protein belongs to the HMBS family. The cofactor is dipyrromethane.

It carries out the reaction 4 porphobilinogen + H2O = hydroxymethylbilane + 4 NH4(+). It participates in porphyrin-containing compound metabolism; protoporphyrin-IX biosynthesis; coproporphyrinogen-III from 5-aminolevulinate: step 2/4. Functionally, tetrapolymerization of the monopyrrole PBG into the hydroxymethylbilane pre-uroporphyrinogen in several discrete steps. In Pyrobaculum calidifontis (strain DSM 21063 / JCM 11548 / VA1), this protein is Probable porphobilinogen deaminase.